Consider the following 208-residue polypeptide: ATP-dependent Clp protease proteolytic subunit (208 aa).

The active-site Nucleophile is the serine 98. Histidine 123 is a catalytic residue.

This sequence belongs to the peptidase S14 family. Fourteen ClpP subunits assemble into 2 heptameric rings which stack back to back to give a disk-like structure with a central cavity, resembling the structure of eukaryotic proteasomes.

It is found in the cytoplasm. The catalysed reaction is Hydrolysis of proteins to small peptides in the presence of ATP and magnesium. alpha-casein is the usual test substrate. In the absence of ATP, only oligopeptides shorter than five residues are hydrolyzed (such as succinyl-Leu-Tyr-|-NHMec, and Leu-Tyr-Leu-|-Tyr-Trp, in which cleavage of the -Tyr-|-Leu- and -Tyr-|-Trp bonds also occurs).. In terms of biological role, cleaves peptides in various proteins in a process that requires ATP hydrolysis. Has a chymotrypsin-like activity. Plays a major role in the degradation of misfolded proteins. This is ATP-dependent Clp protease proteolytic subunit from Wolbachia sp. subsp. Brugia malayi (strain TRS).